A 391-amino-acid polypeptide reads, in one-letter code: Cytochrome b (391 aa).

4 helical membrane passes run 33 to 53 (FGSL…FLAM), 77 to 98 (WLIR…YLHI), 113 to 133 (WSAG…GYVL), and 178 to 198 (FFAF…VHLL). The heme b site is built by histidine 83 and histidine 97. The heme b site is built by histidine 182 and histidine 196. Histidine 201 is a binding site for a ubiquinone. 4 helical membrane passes run 226–246 (YKDL…VLFI), 288–308 (LGGV…PILH), 320–340 (LAQI…WIGG), and 347–367 (FIII…VFFP).

It belongs to the cytochrome b family. As to quaternary structure, the cytochrome bc1 complex contains 3 respiratory subunits (MT-CYB, CYC1 and UQCRFS1), 2 core proteins (UQCRC1 and UQCRC2) and probably 6 low-molecular weight proteins. Requires heme b as cofactor.

The protein localises to the mitochondrion inner membrane. Component of the ubiquinol-cytochrome c reductase complex (complex III or cytochrome b-c1 complex) that is part of the mitochondrial respiratory chain. The b-c1 complex mediates electron transfer from ubiquinol to cytochrome c. Contributes to the generation of a proton gradient across the mitochondrial membrane that is then used for ATP synthesis. The polypeptide is Cytochrome b (mt-cyb) (Kryptolebias marmoratus (Mangrove killifish)).